The chain runs to 873 residues: Probable inorganic carbon transporter subunit DabA (873 aa).

Cys393, Asp395, His575, and Cys590 together coordinate Zn(2+).

The protein belongs to the inorganic carbon transporter (TC 9.A.2) DabA family. As to quaternary structure, forms a complex with DabB. The cofactor is Zn(2+).

It is found in the cell membrane. Functionally, part of an energy-coupled inorganic carbon pump. This chain is Probable inorganic carbon transporter subunit DabA, found in Bacillus licheniformis (strain ATCC 14580 / DSM 13 / JCM 2505 / CCUG 7422 / NBRC 12200 / NCIMB 9375 / NCTC 10341 / NRRL NRS-1264 / Gibson 46).